A 60-amino-acid chain; its full sequence is Cytotoxin 1 (60 aa).

4 disulfide bridges follow: Cys3–Cys21, Cys14–Cys38, Cys42–Cys53, and Cys54–Cys59.

It belongs to the three-finger toxin family. Short-chain subfamily. Type IA cytotoxin sub-subfamily. In terms of assembly, monomer in solution; Homodimer and oligomer in the presence of negatively charged lipids forming a pore with a size ranging between 20 and 30 Angstroms. In terms of tissue distribution, expressed by the venom gland.

The protein resides in the secreted. It is found in the target cell membrane. Functionally, shows cytolytic activity on many different cells by forming pore in lipid membranes. In vivo, increases heart rate or kills the animal by cardiac arrest. In addition, it binds to heparin with high affinity, interacts with Kv channel-interacting protein 1 (KCNIP1) in a calcium-independent manner, and binds to integrin alpha-V/beta-3 (ITGAV/ITGB3) with moderate affinity. This Naja nivea (Cape cobra) protein is Cytotoxin 1.